The primary structure comprises 393 residues: Ethanol acetyltransferase 1 (393 aa).

A mitochondrion-targeting transit peptide spans 1 to 25; it reads MHFTRTLFNQVASKASRQLPVQKRV. One can recognise an AB hydrolase-1 domain in the interval 49-151; it reads PIVFVHGIFG…GVIIDNSPIE (103 aa). Catalysis depends on charge relay system residues Ser122, Asp146, and His296. The segment covering 343-354 has biased composition (basic and acidic residues); it reads AKHAQQIEELRK. Positions 343–393 are disordered; sequence AKHAQQIEELRKVTSTSESSIPHSTQSSEQAFTENIDLARQEREHQKSVSA. Residues 355-375 show a composition bias toward polar residues; sequence VTSTSESSIPHSTQSSEQAFT. Basic and acidic residues predominate over residues 379–393; it reads DLARQEREHQKSVSA.

The protein belongs to the AB hydrolase superfamily.

The protein localises to the mitochondrion. The enzyme catalyses ethanol + acetyl-CoA = ethyl acetate + CoA. The catalysed reaction is acetyl-CoA + H2O = acetate + CoA + H(+). It catalyses the reaction ethyl acetate + H2O = ethanol + acetate + H(+). Functionally, alcohol acetyltransferase that catalyzes the synthesis of ethyl acetate from ethanol and acetyl-CoA. Can also function as a thioesterase by hydrolyzing acetyl-CoA in the absence of ethanol, as well as esterase hydrolyzing ethyl acetate. The sequence is that of Ethanol acetyltransferase 1 (EAT1) from Wickerhamomyces ciferrii (strain ATCC 14091 / BCRC 22168 / CBS 111 / JCM 3599 / NBRC 0793 / NRRL Y-1031 F-60-10) (Yeast).